Reading from the N-terminus, the 179-residue chain is Large ribosomal subunit protein uL5 (179 aa).

The protein belongs to the universal ribosomal protein uL5 family. As to quaternary structure, part of the 50S ribosomal subunit; part of the 5S rRNA/L5/L18/L25 subcomplex. Contacts the 5S rRNA and the P site tRNA. Forms a bridge to the 30S subunit in the 70S ribosome.

This is one of the proteins that bind and probably mediate the attachment of the 5S RNA into the large ribosomal subunit, where it forms part of the central protuberance. In the 70S ribosome it contacts protein S13 of the 30S subunit (bridge B1b), connecting the 2 subunits; this bridge is implicated in subunit movement. Contacts the P site tRNA; the 5S rRNA and some of its associated proteins might help stabilize positioning of ribosome-bound tRNAs. This chain is Large ribosomal subunit protein uL5, found in Desulfatibacillum aliphaticivorans.